Here is a 334-residue protein sequence, read N- to C-terminus: Methionine adenosyltransferase 2 subunit beta (334 aa).

Residues threonine 37–leucine 40, phenylalanine 60–arginine 62, asparagine 71–leucine 72, cysteine 93, arginine 97, tyrosine 159, and leucine 185 each bind NADP(+). Residue threonine 309 is modified to Phosphothreonine. The required for interaction with MAT2A stretch occupies residues leucine 319 to histidine 334.

This sequence belongs to the dTDP-4-dehydrorhamnose reductase family. MAT2B subfamily. As to quaternary structure, heterotrimer; composed of a catalytic MAT2A homodimer that binds one regulatory MAT2B chain. Heterohexamer; composed of a central, catalytic MAT2A homotetramer flanked on either side by a regulatory MAT2B chain. NADP binding increases the affinity for MAT2A.

The protein operates within amino-acid biosynthesis; S-adenosyl-L-methionine biosynthesis; S-adenosyl-L-methionine from L-methionine: step 1/1. Functionally, regulatory subunit of S-adenosylmethionine synthetase 2, an enzyme that catalyzes the formation of S-adenosylmethionine from methionine and ATP. Regulates MAT2A catalytic activity by changing its kinetic properties, increasing its affinity for L-methionine. Can bind NADP (in vitro). In Pongo abelii (Sumatran orangutan), this protein is Methionine adenosyltransferase 2 subunit beta (MAT2B).